A 539-amino-acid polypeptide reads, in one-letter code: Chaperonin GroEL (539 aa).

Residues threonine 29–proline 32, aspartate 86–threonine 90, glycine 413, asparagine 476–alanine 478, and aspartate 492 contribute to the ATP site.

The protein belongs to the chaperonin (HSP60) family. In terms of assembly, forms a cylinder of 14 subunits composed of two heptameric rings stacked back-to-back. Interacts with the co-chaperonin GroES.

It localises to the cytoplasm. The catalysed reaction is ATP + H2O + a folded polypeptide = ADP + phosphate + an unfolded polypeptide.. Functionally, together with its co-chaperonin GroES, plays an essential role in assisting protein folding. The GroEL-GroES system forms a nano-cage that allows encapsulation of the non-native substrate proteins and provides a physical environment optimized to promote and accelerate protein folding. This Geobacillus sp. (strain WCH70) protein is Chaperonin GroEL.